An 87-amino-acid polypeptide reads, in one-letter code: Prolactin-releasing peptide (87 aa).

The N-terminal stretch at 1–22 (MKVLRAWLLCLLMLGLALRGAA) is a signal peptide. A Phenylalanine amide modification is found at phenylalanine 53. The propeptide occupies 58-87 (ATLGDVPKPGLRPRLTCFPLEGGAMSSQDG).

As to expression, medulla oblongata and hypothalamus.

Its subcellular location is the secreted. Stimulates prolactin (PRL) release and regulates the expression of prolactin through its receptor GPR10. May stimulate lactotrophs directly to secrete PRL. This chain is Prolactin-releasing peptide (PRLH), found in Homo sapiens (Human).